The primary structure comprises 151 residues: Acidic phospholipase A2 6 (151 aa).

An N-terminal signal peptide occupies residues 1-27 (MYPAHLLVLLAVCVSLLGAASIPARPL). 7 disulfide bridges follow: C38/C104, C54/C151, C56/C72, C71/C132, C78/C125, C88/C118, and C111/C123. Residues Y55, G57, and G59 each coordinate Ca(2+). H75 is an active-site residue. D76 lines the Ca(2+) pocket. The active site involves D126.

Belongs to the phospholipase A2 family. Group I subfamily. D49 sub-subfamily. The cofactor is Ca(2+). Expressed by the venom gland.

Its subcellular location is the secreted. It carries out the reaction a 1,2-diacyl-sn-glycero-3-phosphocholine + H2O = a 1-acyl-sn-glycero-3-phosphocholine + a fatty acid + H(+). Its function is as follows. PLA2 catalyzes the calcium-dependent hydrolysis of the 2-acyl groups in 3-sn-phosphoglycerides. The polypeptide is Acidic phospholipase A2 6 (Tropidechis carinatus (Australian rough-scaled snake)).